The following is a 315-amino-acid chain: tRNA-specific adenosine deaminase subunit tad3 (315 aa).

The CMP/dCMP-type deaminase domain maps to 158–299; sequence KRIESILEDL…AELNHRYLAY (142 aa). Zn(2+) contacts are provided by His211, Cys253, and Cys256.

Belongs to the cytidine and deoxycytidylate deaminase family. ADAT3 subfamily. Heterodimer with Tad2.

The protein resides in the cytoplasm. It localises to the nucleus. Its function is as follows. Structural subunit of tRNA-specific adenosine deaminase, which deaminates adenosine-34 (the first, also called wobble position of the anticodon) to inosine in many tRNAs. Inosine-34 allows the decoding of 3 different nucleotides at the third position of mRNA codons, as inosine is able to pair with U, C, and A. The wobble inosine tRNA modification is essential for cell cycle progression in the G1/S and G2/M transitions in fission yeast. The protein is tRNA-specific adenosine deaminase subunit tad3 (tad3) of Schizosaccharomyces pombe (strain 972 / ATCC 24843) (Fission yeast).